Consider the following 311-residue polypeptide: Ornithine carbamoyltransferase (311 aa).

Carbamoyl phosphate is bound by residues Ser-54–Thr-57, Gln-81, Arg-105, and His-132–Gln-135. Residues Asn-164, Asp-228, and Ser-232–Met-233 contribute to the L-ornithine site. Residues Cys-268–Leu-269 and Arg-296 contribute to the carbamoyl phosphate site.

This sequence belongs to the aspartate/ornithine carbamoyltransferase superfamily. OTCase family.

It is found in the cytoplasm. The enzyme catalyses carbamoyl phosphate + L-ornithine = L-citrulline + phosphate + H(+). The protein operates within amino-acid biosynthesis; L-arginine biosynthesis; L-arginine from L-ornithine and carbamoyl phosphate: step 1/3. Functionally, reversibly catalyzes the transfer of the carbamoyl group from carbamoyl phosphate (CP) to the N(epsilon) atom of ornithine (ORN) to produce L-citrulline. This is Ornithine carbamoyltransferase from Renibacterium salmoninarum (strain ATCC 33209 / DSM 20767 / JCM 11484 / NBRC 15589 / NCIMB 2235).